The primary structure comprises 104 residues: Ig lambda-2 chain C region (104 aa).

An Ig-like domain is found at 6–99; the sequence is PTLTVFPPST…EGNTVEKSLS (94 aa). A disulfide bridge connects residues cysteine 27 and cysteine 85.

The polypeptide is Ig lambda-2 chain C region (Rattus norvegicus (Rat)).